The primary structure comprises 469 residues: Argininosuccinate lyase (469 aa).

Belongs to the lyase 1 family. Argininosuccinate lyase subfamily.

It is found in the cytoplasm. The catalysed reaction is 2-(N(omega)-L-arginino)succinate = fumarate + L-arginine. The protein operates within amino-acid biosynthesis; L-arginine biosynthesis; L-arginine from L-ornithine and carbamoyl phosphate: step 3/3. This chain is Argininosuccinate lyase, found in Burkholderia lata (strain ATCC 17760 / DSM 23089 / LMG 22485 / NCIMB 9086 / R18194 / 383).